The sequence spans 129 residues: Large ribosomal subunit protein mL53 (129 aa).

The transit peptide at Met1–Ser50 directs the protein to the mitochondrion.

The protein belongs to the mitochondrion-specific ribosomal protein mL53 family.

It localises to the mitochondrion. This is Large ribosomal subunit protein mL53 (mrpl53) from Dictyostelium discoideum (Social amoeba).